Here is a 634-residue protein sequence, read N- to C-terminus: Chaperone protein DnaK (634 aa).

Threonine 199 is subject to Phosphothreonine; by autocatalysis. The span at alanine 601–alanine 618 shows a compositional bias: low complexity. Residues alanine 601–lysine 634 are disordered. Positions valine 623 to lysine 634 are enriched in acidic residues.

This sequence belongs to the heat shock protein 70 family.

In terms of biological role, acts as a chaperone. In Acidithiobacillus ferrooxidans (strain ATCC 23270 / DSM 14882 / CIP 104768 / NCIMB 8455) (Ferrobacillus ferrooxidans (strain ATCC 23270)), this protein is Chaperone protein DnaK.